Consider the following 212-residue polypeptide: Large ribosomal subunit protein uL4 (212 aa).

The disordered stretch occupies residues 45–71 (RQGNASTKTRAEVRGGGRKPWRQKGTG). Residues 60–71 (GGRKPWRQKGTG) show a composition bias toward basic residues.

It belongs to the universal ribosomal protein uL4 family. In terms of assembly, part of the 50S ribosomal subunit.

One of the primary rRNA binding proteins, this protein initially binds near the 5'-end of the 23S rRNA. It is important during the early stages of 50S assembly. It makes multiple contacts with different domains of the 23S rRNA in the assembled 50S subunit and ribosome. Functionally, forms part of the polypeptide exit tunnel. This is Large ribosomal subunit protein uL4 from Nostoc punctiforme (strain ATCC 29133 / PCC 73102).